A 171-amino-acid chain; its full sequence is 3-hydroxydecanoyl-[acyl-carrier-protein] dehydratase (171 aa).

The active site involves His-71.

It belongs to the thioester dehydratase family. FabA subfamily. In terms of assembly, homodimer.

Its subcellular location is the cytoplasm. It catalyses the reaction a (3R)-hydroxyacyl-[ACP] = a (2E)-enoyl-[ACP] + H2O. The catalysed reaction is (3R)-hydroxydecanoyl-[ACP] = (2E)-decenoyl-[ACP] + H2O. The enzyme catalyses (2E)-decenoyl-[ACP] = (3Z)-decenoyl-[ACP]. It participates in lipid metabolism; fatty acid biosynthesis. In terms of biological role, necessary for the introduction of cis unsaturation into fatty acids. Catalyzes the dehydration of (3R)-3-hydroxydecanoyl-ACP to E-(2)-decenoyl-ACP and then its isomerization to Z-(3)-decenoyl-ACP. Can catalyze the dehydratase reaction for beta-hydroxyacyl-ACPs with saturated chain lengths up to 16:0, being most active on intermediate chain length. This chain is 3-hydroxydecanoyl-[acyl-carrier-protein] dehydratase, found in Sinorhizobium medicae (strain WSM419) (Ensifer medicae).